Here is a 303-residue protein sequence, read N- to C-terminus: MLRWTRAWTAPYRGIGLSNSSFSRLPIAPSSSQGGTEPRPVRLSYKLLDGEAASPALVFLHGLFGSKTNFNFVAKTLAQQTGRRVLTVDARNHGESSHSPDMSYEAMSKDLQDLLPHLGLVPCVLIGHSMGGRTAMLLALQRPELVERLIAVDISQVETTSSSNFPNYIAAMRAVDMANEASLSGARKLADERLRSVIQSASIRQLLLTNLVEVDGRFVWRLNLDALAQHLDKILDFPARQETYSGPTLFLRGGNSQFLLPSHYPEIRRLFPRAQMQTVPNAGHWVHSDRPQDFMAAVQSFLA.

Residues 1 to 22 (MLRWTRAWTAPYRGIGLSNSSF) constitute a mitochondrion transit peptide. An AB hydrolase-1 domain is found at 55-290 (PALVFLHGLF…NAGHWVHSDR (236 aa)). Position 75 is an N6-succinyllysine (Lys-75). Residues Ser-129, Asp-225, and His-284 each act as charge relay system in the active site.

Belongs to the AB hydrolase superfamily. In terms of assembly, interacts with OGDH and DLST; this interaction maintains the functional lipoylation of the 2-oxoglutarate dehydrogenase complex. In terms of processing, phosphorylated.

It localises to the mitochondrion. The protein localises to the mitochondrion matrix. The catalysed reaction is a 1,3-diacyl-sn-glycerol + H2O = a 1-acyl-sn-glycerol + a fatty acid + H(+). The enzyme catalyses 1-octadecanoyl-2-(9Z-octadecenoyl)-sn-glycerol + H2O = 2-(9Z-octadecenoyl)-glycerol + octadecanoate + H(+). It carries out the reaction 1-octadecanoyl-2-(4Z,7Z,10Z,13Z,16Z,19Z-docosahexaenoyl)-sn-glycerol + H2O = 2-(4Z,7Z,10Z,13Z,16Z,19Z-docosahexaenoyl)-glycerol + octadecanoate + H(+). It catalyses the reaction a 1,2-diacyl-sn-glycerol + H2O = a 2-acylglycerol + a fatty acid + H(+). The catalysed reaction is 1,2-didecanoylglycerol + H2O = decanoylglycerol + decanoate + H(+). The enzyme catalyses 1-octadecanoyl-2-(5Z,8Z,11Z,14Z-eicosatetraenoyl)-sn-glycerol + H2O = 2-(5Z,8Z,11Z,14Z-eicosatetraenoyl)-glycerol + octadecanoate + H(+). With respect to regulation, the diacylglycerol lipase activity can be modulated by phosphorylation by cAMP-dependent protein kinase. Functionally, catalyzes the hydrolysis of diacylglycerol in vitro and may function as a key regulator in lipid metabolism, namely by regulating the intracellular levels of diacylglycerol. 1,2-diacyl-sn-glycerols are the preferred substrate over 1,3-diacyl-sn-glycerols. The enzyme hydrolyzes stearate in preference to palmitate from the sn-1 position of 1,2-diacyl-sn-glycerols. Maintains the functional lipoylation of the 2-oxoglutarate dehydrogenase complex (OGDHc) through its interaction with the OGDHc by preventing the formation of lipoyl adducts. In addition, is also required for the expansion and differentiation of embryonic stem cells (ESCs). The protein is sn-1-specific diacylglycerol lipase ABHD11 of Bos taurus (Bovine).